A 214-amino-acid polypeptide reads, in one-letter code: Protein OPG034 (214 aa).

This sequence belongs to the orthopoxvirus OPG034 family.

This chain is Protein OPG034 (OPG034), found in Monkeypox virus.